The chain runs to 493 residues: Probable vesicular acetylcholine transporter-B (493 aa).

The Cytoplasmic segment spans residues 1–39 (MQSTGAPGLAQSAVLQLSAMGERSRELGGALREPERKRR). A helical membrane pass occupies residues 40–60 (LLLVVVCVALLLDNMLYMVIV). Topologically, residues 61–86 (PIIPDYLADLRGERGNSSADLDIQIG) are lumenal, vesicle. The N-linked (GlcNAc...) asparagine glycan is linked to N76. The chain crosses the membrane as a helical span at residues 87–107 (VLFASKALLQLLVNPLSGTFI). The Cytoplasmic portion of the chain corresponds to 108-113 (DRVGYD). Residues 114-134 (LPLLIGLLVMFLSTCIFAFAE) traverse the membrane as a helical segment. At 135-143 (NYGTLFAAR) the chain is on the lumenal, vesicle side. Residues 144–164 (SLQGLGSAFADTSGIAMIADK) traverse the membrane as a helical segment. The Cytoplasmic segment spans residues 165 to 174 (FTEEAERSRA). The helical transmembrane segment at 175-195 (LGIALAFISFGSLVAPPFGGI) threads the bilayer. Residues 196–203 (LYEFAGKR) are Lumenal, vesicle-facing. A helical membrane pass occupies residues 204–224 (VPFIVLACVCLADGVLLLTVV). The Cytoplasmic portion of the chain corresponds to 225-247 (KPFSDRTRENMPVGTPIHRLMVD). A helical membrane pass occupies residues 248 to 268 (PYIAVVAGALTVCNIPLAFLE). Residues 269-284 (PTIANWMESTMDASKW) lie on the Lumenal, vesicle side of the membrane. The chain crosses the membrane as a helical span at residues 285–305 (QMGLVWLPAFLPHVLGVYITV). The Cytoplasmic portion of the chain corresponds to 306-315 (RLAARYPERQ). Residues 316-336 (WFYGALGMVIIGASSCTVPAC) form a helical membrane-spanning segment. Residues 337–347 (KTFGELVFPLC) are Lumenal, vesicle-facing. Residues 348–368 (GICFGIALVDTALLPTLAFLV) form a helical membrane-spanning segment. Topologically, residues 369–378 (DVRHVSVYGS) are cytoplasmic. A helical membrane pass occupies residues 379-399 (VYAIADISYSVAYAMGPVVAG). Residues 400 to 406 (QIVHNLG) lie on the Lumenal, vesicle side of the membrane. The helical transmembrane segment at 407-427 (FVQLNLGMGLVNVLYAPALLL) threads the bilayer. Residues 428-493 (LRPVCQIKPS…EEEESGPESA (66 aa)) are Cytoplasmic-facing. The disordered stretch occupies residues 467–493 (GLSAGAGTEHGLRGRSEEEEESGPESA). The segment covering 483–493 (EEEEESGPESA) has biased composition (acidic residues).

This sequence belongs to the major facilitator superfamily. Vesicular transporter family.

It is found in the membrane. Functionally, involved in acetylcholine transport into synaptic vesicles. The chain is Probable vesicular acetylcholine transporter-B (slc18a3b) from Danio rerio (Zebrafish).